A 149-amino-acid chain; its full sequence is Ribosome-binding factor A (149 aa).

Residues 125–149 form a disordered region; the sequence is FGSADEVLNEDEGATDDTDDTKGKD. Acidic residues predominate over residues 131 to 143; the sequence is VLNEDEGATDDTD.

Belongs to the RbfA family. As to quaternary structure, monomer. Binds 30S ribosomal subunits, but not 50S ribosomal subunits or 70S ribosomes.

It is found in the cytoplasm. One of several proteins that assist in the late maturation steps of the functional core of the 30S ribosomal subunit. Associates with free 30S ribosomal subunits (but not with 30S subunits that are part of 70S ribosomes or polysomes). Required for efficient processing of 16S rRNA. May interact with the 5'-terminal helix region of 16S rRNA. The protein is Ribosome-binding factor A of Shewanella sp. (strain W3-18-1).